The primary structure comprises 249 residues: Small ribosomal subunit protein eS6 (249 aa).

K14 is covalently cross-linked (Glycyl lysine isopeptide (Lys-Gly) (interchain with G-Cter in SUMO2)). E35 carries the post-translational modification ADP-ribosyl glutamic acid. R137 carries the (3R)-3-hydroxyarginine modification. Residue S148 is modified to Phosphoserine. Position 211 is an N6-acetyllysine (K211). Over residues 217 to 229 (MKEAKEKRQEQIA) the composition is skewed to basic and acidic residues. Residues 217 to 249 (MKEAKEKRQEQIAKRRRLSSLRASTSKSESSQK) are disordered. 2 positions are modified to phosphoserine; by RPS6KA1, RPS6KA3, DAPK1 and PASK: S235 and S236. Residues 236-249 (SLRASTSKSESSQK) show a composition bias toward low complexity. A phosphoserine mark is found at S240, S242, S244, and S247.

Belongs to the eukaryotic ribosomal protein eS6 family. Component of the small ribosomal subunit. Part of the small subunit (SSU) processome, composed of more than 70 proteins and the RNA chaperone small nucleolar RNA (snoRNA) U3. Ribosomal protein S6 is the major substrate of protein kinases in eukaryote ribosomes. The phosphorylation is stimulated by growth factors, tumor promoting agents, and mitogens. It is dephosphorylated at growth arrest. Phosphorylated at Ser-235 and Ser-236 by RPS6KA1 and RPS6KA3; phosphorylation at these sites facilitates the assembly of the pre-initiation complex. Post-translationally, specifically hydroxylated (with R stereochemistry) at C-3 of Arg-137 by KDM8. In terms of processing, mono-ADP-ribosylation at Glu-35 by PARP16 inhibits polysome assembly and mRNA loading, thereby inhibiting protein translation.

It localises to the cytoplasm. The protein localises to the nucleus. The protein resides in the nucleolus. In terms of biological role, component of the 40S small ribosomal subunit. Plays an important role in controlling cell growth and proliferation through the selective translation of particular classes of mRNA. Part of the small subunit (SSU) processome, first precursor of the small eukaryotic ribosomal subunit. During the assembly of the SSU processome in the nucleolus, many ribosome biogenesis factors, an RNA chaperone and ribosomal proteins associate with the nascent pre-rRNA and work in concert to generate RNA folding, modifications, rearrangements and cleavage as well as targeted degradation of pre-ribosomal RNA by the RNA exosome. The chain is Small ribosomal subunit protein eS6 (RPS6) from Bos taurus (Bovine).